The following is a 387-amino-acid chain: MTVGLGMPQPPAPTLAPRRATRQLMVGNVGVGSDHPVSVQSMCTTKTHDVNSTLQQIAELTAAGCDIVRVACPRQEDADALAEIARHSQIPVVADIHFQPRYIFAAIDAGCAAVRVNPGNIKEFDGRVGEVAKAAGAAGIPIRIGVNAGSLDKRFMEKYGKATPEALVESALWEASLFEEHGFGDIKISVKHNDPVVMVAAYELLAARCDYPLHLGVTEAGPAFQGTIKSAVAFGALLSRGIGDTIRVSLSAPPVEEVKVGNQVLESLNLRPRSLEIVSCPSCGRAQVDVYTLANEVTAGLDGLDVPLRVAVMGCVVNGPGEAREADLGVASGNGKGQIFVRGEVIKTVPEAQIVETLIEEAMRLAAEMGEQDPGATPSGSPIVTVS.

Positions 280, 283, 315, and 322 each coordinate [4Fe-4S] cluster.

Belongs to the IspG family. The cofactor is [4Fe-4S] cluster.

The catalysed reaction is (2E)-4-hydroxy-3-methylbut-2-enyl diphosphate + oxidized [flavodoxin] + H2O + 2 H(+) = 2-C-methyl-D-erythritol 2,4-cyclic diphosphate + reduced [flavodoxin]. It participates in isoprenoid biosynthesis; isopentenyl diphosphate biosynthesis via DXP pathway; isopentenyl diphosphate from 1-deoxy-D-xylulose 5-phosphate: step 5/6. Its function is as follows. Converts 2C-methyl-D-erythritol 2,4-cyclodiphosphate (ME-2,4cPP) into 1-hydroxy-2-methyl-2-(E)-butenyl 4-diphosphate. The protein is 4-hydroxy-3-methylbut-2-en-1-yl diphosphate synthase (flavodoxin) of Mycobacterium bovis (strain BCG / Pasteur 1173P2).